Here is a 110-residue protein sequence, read N- to C-terminus: uncharacterized protein (110 aa).

Residues 1-72 (MWRSSNQRGV…NHRNIHLRNP (72 aa)) are disordered. The span at 10–23 (VSRRRDKSMRKYTR) shows a compositional bias: basic residues. Over residues 48–57 (KNTYTGNISS) the composition is skewed to polar residues.

This is an uncharacterized protein from Human herpesvirus 6A (strain Uganda-1102) (HHV-6 variant A).